Reading from the N-terminus, the 407-residue chain is Probable tRNA sulfurtransferase (407 aa).

The THUMP domain occupies 61-165 (NEITYRLSKI…LDAIYMYEEV (105 aa)). Residues 183–184 (ML), 208–209 (HF), Arg-265, Gly-287, and Gln-296 contribute to the ATP site.

The protein belongs to the ThiI family.

The protein resides in the cytoplasm. The enzyme catalyses [ThiI sulfur-carrier protein]-S-sulfanyl-L-cysteine + a uridine in tRNA + 2 reduced [2Fe-2S]-[ferredoxin] + ATP + H(+) = [ThiI sulfur-carrier protein]-L-cysteine + a 4-thiouridine in tRNA + 2 oxidized [2Fe-2S]-[ferredoxin] + AMP + diphosphate. It catalyses the reaction [ThiS sulfur-carrier protein]-C-terminal Gly-Gly-AMP + S-sulfanyl-L-cysteinyl-[cysteine desulfurase] + AH2 = [ThiS sulfur-carrier protein]-C-terminal-Gly-aminoethanethioate + L-cysteinyl-[cysteine desulfurase] + A + AMP + 2 H(+). The protein operates within cofactor biosynthesis; thiamine diphosphate biosynthesis. Its function is as follows. Catalyzes the ATP-dependent transfer of a sulfur to tRNA to produce 4-thiouridine in position 8 of tRNAs, which functions as a near-UV photosensor. Also catalyzes the transfer of sulfur to the sulfur carrier protein ThiS, forming ThiS-thiocarboxylate. This is a step in the synthesis of thiazole, in the thiamine biosynthesis pathway. The sulfur is donated as persulfide by IscS. The protein is Probable tRNA sulfurtransferase of Staphylococcus aureus (strain MSSA476).